We begin with the raw amino-acid sequence, 356 residues long: Phosphate acyltransferase (356 aa).

The protein belongs to the PlsX family. In terms of assembly, homodimer. Probably interacts with PlsY.

It localises to the cytoplasm. It catalyses the reaction a fatty acyl-[ACP] + phosphate = an acyl phosphate + holo-[ACP]. It functions in the pathway lipid metabolism; phospholipid metabolism. In terms of biological role, catalyzes the reversible formation of acyl-phosphate (acyl-PO(4)) from acyl-[acyl-carrier-protein] (acyl-ACP). This enzyme utilizes acyl-ACP as fatty acyl donor, but not acyl-CoA. The protein is Phosphate acyltransferase of Mesorhizobium japonicum (strain LMG 29417 / CECT 9101 / MAFF 303099) (Mesorhizobium loti (strain MAFF 303099)).